The sequence spans 443 residues: Chromosome partition protein MukF (443 aa).

The interval Leu-209–Ile-237 is leucine-zipper.

This sequence belongs to the MukF family. As to quaternary structure, interacts, and probably forms a ternary complex, with MukE and MukB via its C-terminal region. The complex formation is stimulated by calcium or magnesium. It is required for an interaction between MukE and MukB.

The protein localises to the cytoplasm. It is found in the nucleoid. Functionally, involved in chromosome condensation, segregation and cell cycle progression. May participate in facilitating chromosome segregation by condensation DNA from both sides of a centrally located replisome during cell division. Not required for mini-F plasmid partitioning. Probably acts via its interaction with MukB and MukE. Overexpression results in anucleate cells. It has a calcium binding activity. The sequence is that of Chromosome partition protein MukF from Actinobacillus pleuropneumoniae serotype 3 (strain JL03).